We begin with the raw amino-acid sequence, 678 residues long: Geranylgeranyl transferase type-2 subunit alpha 1 (678 aa).

PFTA repeat units follow at residues 40–74, 86–120, 121–155, 156–190, and 201–235; these read YTNEAIELSTKLLEINPEAYTAWNYRKLAVEDRLA, ILDEELRVVESALRQNFKSYGAWHHRKWVLSKGHS, SVGNELRLLEKFQKLDSRNFHAWNYRRFVVELTNR, SEQDELQYTDDMINNNFSNYSAWHNRSVLLSSLLA, and KIPEEYDFVHSAIFTEPDDQSGWFYHLWLLDQTLN. 5 LRR repeats span residues 510-532, 533-554, 555-578, 580-604, and 638-663; these read MNNLVCLRLNNLSLSRIASVEKL, LFVQMLDLSHNELHSTEGLEAM, QLLSCLNLSHNRIRSFSALDSLRH, KQLKVLDVSHNHIGKHSVDTTRYLC, and DLNLKQLDIAGNEIAGEEFSSFVLQV.

This sequence belongs to the protein prenyltransferase subunit alpha family. In terms of assembly, heterotrimer composed of the alpha subunit RGTA, the beta subunit RGTB and REP; within this trimer, RGTA and RGTB form the catalytic component, while REP mediates peptide substrate binding.

It catalyses the reaction geranylgeranyl diphosphate + L-cysteinyl-[protein] = S-geranylgeranyl-L-cysteinyl-[protein] + diphosphate. With respect to regulation, the enzymatic reaction requires the aid of the Rab escort protein REP. Functionally, catalyzes the transfer of a geranylgeranyl moiety from geranylgeranyl diphosphate to both cysteines of Rab proteins with the C-terminal sequence -CCXX, CXXX, -XCCX and -XCXC, such as RABA1A, RABA2A, RABF2A and RABG2. In vitro, can prenylate PGGTI targets with the C-terminal Cys-aliphatic-aliphatic-X (CaaX) with leucine in the terminal position. Substrates with the C-terminal sequence -CSIL such as ARAC11/ROP1 or GG2/AGG2 are prenylated independently of REP and when the alpha subunit is associated with a beta subunit (RGTB1 or RGTB2). This Arabidopsis thaliana (Mouse-ear cress) protein is Geranylgeranyl transferase type-2 subunit alpha 1.